A 256-amino-acid chain; its full sequence is Type III pantothenate kinase (256 aa).

6-13 (DVGNSHIY) lines the ATP pocket. Substrate contacts are provided by residues tyrosine 99 and 106–109 (GADR). Catalysis depends on aspartate 108, which acts as the Proton acceptor. Aspartate 129 contributes to the K(+) binding site. Threonine 132 is an ATP binding site. Residue threonine 184 participates in substrate binding.

The protein belongs to the type III pantothenate kinase family. Homodimer. The cofactor is NH4(+). K(+) serves as cofactor.

The protein resides in the cytoplasm. The enzyme catalyses (R)-pantothenate + ATP = (R)-4'-phosphopantothenate + ADP + H(+). It participates in cofactor biosynthesis; coenzyme A biosynthesis; CoA from (R)-pantothenate: step 1/5. Its function is as follows. Catalyzes the phosphorylation of pantothenate (Pan), the first step in CoA biosynthesis. The protein is Type III pantothenate kinase of Legionella pneumophila (strain Paris).